The primary structure comprises 475 residues: MASSLSPPEEASYHHRHTKRYTSSASSASSTTNGTVESSVSDFVKRPKISHPNYISSSEIESEFSHHDPDFARINNGSFGCCPSSILALQRDWQLRFLRQPDRFYFDELKPKISDSRSVIKRLINAEHDDEVSIVDNATTAAAIVLQQTAWAFREGRFDKGDAVVMLHYAYGSVKKSVEAYVTRSGGHVTEVQLPFPVISADEIIDRFRIGLESGKANGRRVRLALIDHVTSMPSVVIPIKELVKICRREGVDQVFVDAAHGIGCVDVDMKEIGADFYTSNLHKWFFAPPSVAFLYCRKSSNGGVADLHHPVVSNEYGNGLAVESSWVGTRDYSAQLVVPSILEFVNRFEGGIDGIKKRNHESVVEMGQMLVKSWGTQLGCPPEMCASMIMVGLPVCLGVSSESDVLKLRTFLREKFRIEIPIYFRPPGDGEIDPITGYVRISFQVYNKPEDYHRLRDAINGLVRDGFKCTSLSC.

A chloroplast-targeting transit peptide spans 1–24; the sequence is MASSLSPPEEASYHHRHTKRYTSS. Positions 1–40 are disordered; the sequence is MASSLSPPEEASYHHRHTKRYTSSASSASSTTNGTVESSV. Low complexity predominate over residues 22-32; that stretch reads TSSASSASSTT. Residue Lys284 is modified to N6-(pyridoxal phosphate)lysine.

This sequence belongs to the class-V pyridoxal-phosphate-dependent aminotransferase family. In terms of assembly, interacts in vitro with QS.

Its subcellular location is the plastid. The protein resides in the chloroplast. Functionally, may catalyze the production of hydrogen sulfide (H2S) from cysteine. In Arabidopsis thaliana (Mouse-ear cress), this protein is Probable L-cysteine desulfhydrase, chloroplastic.